A 536-amino-acid chain; its full sequence is Chaperonin GroEL 2 (536 aa).

ATP-binding positions include T29 to P32, D86 to T90, G413, N476 to A478, and D492.

This sequence belongs to the chaperonin (HSP60) family. In terms of assembly, forms a cylinder of 14 subunits composed of two heptameric rings stacked back-to-back. Interacts with the co-chaperonin GroES.

The protein resides in the cytoplasm. The catalysed reaction is ATP + H2O + a folded polypeptide = ADP + phosphate + an unfolded polypeptide.. Functionally, together with its co-chaperonin GroES, plays an essential role in assisting protein folding. The GroEL-GroES system forms a nano-cage that allows encapsulation of the non-native substrate proteins and provides a physical environment optimized to promote and accelerate protein folding. In Moorella thermoacetica (strain ATCC 39073 / JCM 9320), this protein is Chaperonin GroEL 2.